The following is a 420-amino-acid chain: Exodeoxyribonuclease 7 large subunit (420 aa).

This sequence belongs to the XseA family. Heterooligomer composed of large and small subunits.

The protein resides in the cytoplasm. It catalyses the reaction Exonucleolytic cleavage in either 5'- to 3'- or 3'- to 5'-direction to yield nucleoside 5'-phosphates.. In terms of biological role, bidirectionally degrades single-stranded DNA into large acid-insoluble oligonucleotides, which are then degraded further into small acid-soluble oligonucleotides. In Helicobacter pylori (strain P12), this protein is Exodeoxyribonuclease 7 large subunit.